Reading from the N-terminus, the 984-residue chain is Probable beta-galactosidase C (984 aa).

The first 19 residues, 1-19 (MRLLNIFTTLCLLLWSGAA), serve as a signal peptide directing secretion. Substrate is bound by residues Y78, N123, A124, E125, and N183. E184 acts as the Proton donor in catalysis. Y247 contacts substrate. C253 and C300 are disulfide-bonded. An N-linked (GlcNAc...) asparagine glycan is attached at N272. E283 acts as the Nucleophile in catalysis. Residue Y349 participates in substrate binding. N-linked (GlcNAc...) asparagine glycosylation is found at N387, N433, N462, N516, N583, N599, N673, N716, N756, N860, and N870.

It belongs to the glycosyl hydrolase 35 family.

It localises to the secreted. It carries out the reaction Hydrolysis of terminal non-reducing beta-D-galactose residues in beta-D-galactosides.. In terms of biological role, cleaves beta-linked terminal galactosyl residues from gangliosides, glycoproteins, and glycosaminoglycans. The protein is Probable beta-galactosidase C (lacC) of Sclerotinia sclerotiorum (strain ATCC 18683 / 1980 / Ss-1) (White mold).